We begin with the raw amino-acid sequence, 261 residues long: MSLLSIITIGLAGLGGLVNGQRDLSVELGVASNFAILAKAGISSVPDSAILGDIGVSPAAATYITGFGLTQDSSTTYATSPQVTGLIYAADYSTPTPNYLAAAVANAETAYNQAAGFVDPDFLELGAGELRDQTLVPGLYKWTSSVSVPTDLTFEGNGDATWVFQIAGGLSLADGVAFTLAGGANSTNIAFQVGDDVTVGKGAHFEGVLLAKRFVTLQTGSSLNGRVLSQTEVALQKATVNSPFVPAPEVVQKRSNARQWL.

Residues 1 to 20 (MSLLSIITIGLAGLGGLVNG) form the signal peptide. A glycan (N-linked (GlcNAc...) asparagine) is linked at Asn-185.

Belongs to the ice-binding protein family. Homodimer. Dimerization is not required for the thermal hysteresis (TH) activity. In terms of processing, glycosylated. Glycosylation is not required for the thermal hysteresis (TH) activity. Glycosylation may increase stability and secretion of this protein.

Its subcellular location is the secreted. Functionally, confers freeze tolerance. Binds to the surface of ice crystals and inhibits their growth. Has low thermal hysteresis (TH) activity, which is the ability to lower the freezing point of an aqueous solution below its melting point. The TH activity of this protein is approximately 0.2 degrees Celsius at 50 uM and 0.3 degrees Celsius at 400 uM. The sequence is that of Ice-binding protein from Leucosporidium sp. (strain AY30) (Arctic yeast).